The following is a 364-amino-acid chain: MANKTVLFNKHLESNAKMVDFHGWDMPLNYGSQIEEHHAVRQDAGMFDVSHMTVVDVTGTDACAFLRKLLANDVAKLKVPGKALYGGMLDDNAGIIDDLITYYLTDTFYRVVVNSATREKDLAWIAKQSQGFDVTVTERPELAMIAVQGPNAKAKAAAVFSSEQNAAIEGMKPFFGKQAGSLFIATTGYTGEAGYEIIVPETEAEALWQALLDQGVKPCGLGARDTLRLEAGMNLYGLDMDETINPLAANMGWTIAWEPTDRDFIGRKALEALRDAGTDKLVGLVMEEKGVLRHDMPVFFTDAAGVEQQGVITSGTFSPTLGYSIAMARVPSSIGDTAEVEMRKKRVAVRVVAPNFVRNGKQAF.

The protein belongs to the GcvT family. The glycine cleavage system is composed of four proteins: P, T, L and H.

It catalyses the reaction N(6)-[(R)-S(8)-aminomethyldihydrolipoyl]-L-lysyl-[protein] + (6S)-5,6,7,8-tetrahydrofolate = N(6)-[(R)-dihydrolipoyl]-L-lysyl-[protein] + (6R)-5,10-methylene-5,6,7,8-tetrahydrofolate + NH4(+). In terms of biological role, the glycine cleavage system catalyzes the degradation of glycine. The polypeptide is Aminomethyltransferase (Shewanella oneidensis (strain ATCC 700550 / JCM 31522 / CIP 106686 / LMG 19005 / NCIMB 14063 / MR-1)).